The following is a 70-amino-acid chain: Brevinin-1CG3 (70 aa).

The signal sequence occupies residues 1 to 22; that stretch reads MFTLKKSLLLLFFLGTINLSLC. Residues 23 to 44 constitute a propeptide, removed in mature form; it reads EQERNAEEERRDDSDKRDVEVE. Cysteine 64 and cysteine 70 are joined by a disulfide.

This sequence belongs to the frog skin active peptide (FSAP) family. Brevinin subfamily. In terms of tissue distribution, expressed by the skin glands.

It localises to the secreted. Functionally, antimicrobial peptide active against a variety of Gram-positive and some Gram-negative bacterial strains. Has antifungal activity against a slime mold isolate. Has hemolytic activity against human erythrocytes. This Amolops chunganensis (Chungan torrent frog) protein is Brevinin-1CG3.